The sequence spans 327 residues: MARFAWTRVAPVALVTFWLVLSLSPTDAQVNLSSVDFLDLPALLGVPVDPKRARGYLLVARPADACHAIEGPWPDNHSLDPLVLVRPLGCSWEQTGRRAQRAGATAASVGPEAPGQLREFEDLEVTVRCDQPARVLLPHAEPCPDPECHPVVVASWALARALALAASTLFVLRQLWPWVRGLGSRGTAVKTQTCQKAQVRTFTRLSDLCAICLDDYEEGERLKILPCAHAYHCRCIDPWFSRAAQRSCPLCKQSVASTHDGSTDGSVGGEEPPLPGHRPPIWAIQARLRSRRLELLARTVPCRRCSSTTSLGVAENVAQSEATSELS.

The first 28 residues, 1–28 (MARFAWTRVAPVALVTFWLVLSLSPTDA), serve as a signal peptide directing secretion. Residues 29 to 150 (QVNLSSVDFL…EPCPDPECHP (122 aa)) lie on the Lumenal side of the membrane. N31 carries an N-linked (GlcNAc...) asparagine glycan. A helical membrane pass occupies residues 151–171 (VVVASWALARALALAASTLFV). Residues 172-327 (LRQLWPWVRG…AQSEATSELS (156 aa)) are Cytoplasmic-facing. Residues 209 to 252 (CAICLDDYEEGERLKILPCAHAYHCRCIDPWFSRAAQRSCPLCK) form an RING-type; atypical zinc finger. The span at 256–265 (ASTHDGSTDG) shows a compositional bias: polar residues. A disordered region spans residues 256–279 (ASTHDGSTDGSVGGEEPPLPGHRP).

In terms of assembly, interacts with CANX. Expressed exclusively in spermatids (at protein level).

The protein resides in the endoplasmic reticulum membrane. The catalysed reaction is S-ubiquitinyl-[E2 ubiquitin-conjugating enzyme]-L-cysteine + [acceptor protein]-L-lysine = [E2 ubiquitin-conjugating enzyme]-L-cysteine + N(6)-ubiquitinyl-[acceptor protein]-L-lysine.. The protein operates within protein modification; protein ubiquitination. Functionally, E3 ubiquitin-protein ligase that acts as a negative regulator of NOD2 signaling by mediating ubiquitination and degradation of RIPK2. Also catalyzes ubiquitination and proteasomal degradation of CANX within the endoplasmic reticulum. Could have a role in spermatogenesis. This Mus musculus (Mouse) protein is E3 ubiquitin-protein ligase ZNRF4.